A 393-amino-acid polypeptide reads, in one-letter code: MEITMGVMDENATNTSTNYFPLLDPLGAQAASFPFNFSYGDYDMPLDEDEDMTNSRTFFAAKIVIGMALVGIMLVCGIGNFIFIAALARYKKLRNLTNLLIANLAISDFLVAIVCCPFEMDYYVVRQLSWEHGHVLCASVNYLRTVSLYVSTNALLAIAIDRYLAIVHPLRPRMKYQTATGLIALVWVVSILVAIPSAYFTTETVLVIVKSQEKIFCGQIWPVDQQIYYKSYFLFIFGIEFVGPVVTMTLCYARISRELWFKAVPGFQTEQIRKRLRCRRKTVLVLMCILTAYVLCWAPFYGFAIVRDFFPTVFVKEKHYLTAFYVVECIAMSNSMINTVCFVTVKNNTIKYFKKIMLLHWKASYNGSKSSGDLDLKTTGVPATEEVDCIGLK.

The Extracellular portion of the chain corresponds to 1–63; sequence MEITMGVMDE…NSRTFFAAKI (63 aa). N-linked (GlcNAc...) asparagine glycans are attached at residues N11, N14, and N36. A helical membrane pass occupies residues 64 to 84; sequence VIGMALVGIMLVCGIGNFIFI. At 85–98 the chain is on the cytoplasmic side; it reads AALARYKKLRNLTN. A helical membrane pass occupies residues 99 to 119; the sequence is LLIANLAISDFLVAIVCCPFE. Over 120–145 the chain is Extracellular; the sequence is MDYYVVRQLSWEHGHVLCASVNYLRT. A disulfide bridge links C137 with C217. Residues 146-166 form a helical membrane-spanning segment; sequence VSLYVSTNALLAIAIDRYLAI. Over 167–179 the chain is Cytoplasmic; that stretch reads VHPLRPRMKYQTA. Residues 180-200 form a helical membrane-spanning segment; the sequence is TGLIALVWVVSILVAIPSAYF. At 201-232 the chain is on the extracellular side; it reads TTETVLVIVKSQEKIFCGQIWPVDQQIYYKSY. The chain crosses the membrane as a helical span at residues 233 to 253; the sequence is FLFIFGIEFVGPVVTMTLCYA. Over 254–282 the chain is Cytoplasmic; sequence RISRELWFKAVPGFQTEQIRKRLRCRRKT. A helical membrane pass occupies residues 283–303; that stretch reads VLVLMCILTAYVLCWAPFYGF. At 304–322 the chain is on the extracellular side; that stretch reads AIVRDFFPTVFVKEKHYLT. Residues 323 to 343 traverse the membrane as a helical segment; it reads AFYVVECIAMSNSMINTVCFV. Residues 344–393 lie on the Cytoplasmic side of the membrane; the sequence is TVKNNTIKYFKKIMLLHWKASYNGSKSSGDLDLKTTGVPATEEVDCIGLK.

Belongs to the G-protein coupled receptor 1 family.

The protein resides in the cell membrane. Receptor for prokineticin 1. Exclusively coupled to the G(q) subclass of heteromeric G proteins. Activation leads to mobilization of calcium, stimulation of phosphoinositide turnover and activation of p44/p42 mitogen-activated protein kinase. May play a role during early pregnancy. In Bos taurus (Bovine), this protein is Prokineticin receptor 1 (PROKR1).